A 452-amino-acid polypeptide reads, in one-letter code: Cholesterol 7-desaturase nvd 2 (452 aa).

Transmembrane regions (helical) follow at residues 6–26 and 32–52; these read LIRI…MGLC and FPVM…ALVM. In terms of domain architecture, Rieske spans 107-212; sequence WFKVADSTWI…CCEVDGMAYL (106 aa). Cys148, His150, Cys169, and His172 together coordinate [2Fe-2S] cluster.

The protein belongs to the cholesterol 7-desaturase family. [2Fe-2S] cluster serves as cofactor.

It localises to the membrane. It catalyses the reaction cholesterol + NADPH + O2 + H(+) = 7-dehydrocholesterol + NADP(+) + 2 H2O. The catalysed reaction is cholesterol + NADH + O2 + H(+) = 7-dehydrocholesterol + NAD(+) + 2 H2O. Its pathway is steroid hormone biosynthesis; dafachronic acid biosynthesis. Catalyzes the production of 7-dehydrocholesterol (7-DHC or cholesta-5,7-dien-3beta-ol) by inserting a double bond (desaturating) at the C7-C8 single bond of cholesterol. Essential regulator of steroid biosynthesis as this reaction is the first step in the synthesis of the steroid hormone Delta(7)-dafachronic acid. The sequence is that of Cholesterol 7-desaturase nvd 2 from Ciona intestinalis (Transparent sea squirt).